A 155-amino-acid polypeptide reads, in one-letter code: Deoxyuridine 5'-triphosphate nucleotidohydrolase (155 aa).

Substrate is bound by residues 74–76 (RSG), asparagine 87, and 91–93 (LID).

It belongs to the dUTPase family. Requires Mg(2+) as cofactor.

It catalyses the reaction dUTP + H2O = dUMP + diphosphate + H(+). The protein operates within pyrimidine metabolism; dUMP biosynthesis; dUMP from dCTP (dUTP route): step 2/2. Functionally, this enzyme is involved in nucleotide metabolism: it produces dUMP, the immediate precursor of thymidine nucleotides and it decreases the intracellular concentration of dUTP so that uracil cannot be incorporated into DNA. This Xylella fastidiosa (strain M12) protein is Deoxyuridine 5'-triphosphate nucleotidohydrolase.